The primary structure comprises 461 residues: Probable carboxypeptidase MGYG_04702 (461 aa).

Positions Met-1 to Ala-20 are cleaved as a signal peptide. Residues Asn-48 and Asn-99 are each glycosylated (N-linked (GlcNAc...) asparagine). Asp-176 contributes to the Zn(2+) binding site. Glu-208 serves as the catalytic Proton acceptor. Residue Glu-209 coordinates Zn(2+). Asn-396 carries an N-linked (GlcNAc...) asparagine glycan.

Belongs to the peptidase M20A family. The cofactor is Zn(2+).

It is found in the secreted. In Arthroderma gypseum (strain ATCC MYA-4604 / CBS 118893) (Microsporum gypseum), this protein is Probable carboxypeptidase MGYG_04702.